A 506-amino-acid chain; its full sequence is Cytochrome P450 6a8 (506 aa).

Cys451 is a heme binding site.

It belongs to the cytochrome P450 family. Requires heme as cofactor.

It is found in the endoplasmic reticulum membrane. It localises to the microsome membrane. Involved in the metabolism of insect hormones and in the breakdown of synthetic insecticides. This Drosophila melanogaster (Fruit fly) protein is Cytochrome P450 6a8 (Cyp6a8).